We begin with the raw amino-acid sequence, 266 residues long: Hydroxyethylthiazole kinase (266 aa).

A substrate-binding site is contributed by methionine 43. ATP-binding residues include arginine 119 and threonine 166. Glycine 193 is a binding site for substrate.

This sequence belongs to the Thz kinase family. The cofactor is Mg(2+).

It carries out the reaction 5-(2-hydroxyethyl)-4-methylthiazole + ATP = 4-methyl-5-(2-phosphooxyethyl)-thiazole + ADP + H(+). It functions in the pathway cofactor biosynthesis; thiamine diphosphate biosynthesis; 4-methyl-5-(2-phosphoethyl)-thiazole from 5-(2-hydroxyethyl)-4-methylthiazole: step 1/1. Its function is as follows. Catalyzes the phosphorylation of the hydroxyl group of 4-methyl-5-beta-hydroxyethylthiazole (THZ). In Methanococcus maripaludis (strain DSM 14266 / JCM 13030 / NBRC 101832 / S2 / LL), this protein is Hydroxyethylthiazole kinase.